Reading from the N-terminus, the 391-residue chain is MAQNNSDGVEGASPAKRRRLDQVTYSEICADFRSGSFSDFFMEKYNFAQVASYKMQPDDDWTDMIAQHAKIELDPTKEYVILSTVFIQSNCYIIGHGAKIVIVGEPGIAFKVLTKSFGPVITNMWAVSFTDCVFQRRDSYNGKVFTCASQVLFHNCFFVGFTGTCITSTAALTVRGCQFLACYRPIMFLAAFDLTVKHCVFDKCVIAISTEGDFEISSNLCTDSCCFLSAAGTGIFSYNSIVNPFTLQDSAEFSMVTCADAKVQLLHTIHIHSNPKLVYPQFMHNVLLRAKLFVGRRRGGFHPHFCSLKYSLLTLAKGSERKVNLSTCYPDGLKVYKVLNRNPNRLFTRLCECDASHQTADIVLGEVGLPATADPTLDSVDCLEFSSDEEW.

Phosphoserine is present on Ser387.

This sequence belongs to the adenoviridae E1B 55 kDa protein family. Interacts with host PML-4 and PML-5; this interaction promotes efficient subnuclear targeting of E1B-55K to PML nuclear bodies. Interacts with E4-ORF3 protein. Interacts with E4-ORF6 protein.

The protein resides in the host nucleus. The protein localises to the host cytoplasm. Plays a major role to prevent cellular inhibition of viral genome replication. Assembles an SCF-like E3 ubiquitin ligase complex based on the cellular proteins ELOB, ELOC, CUL5 and RBX1, in cooperation with viral E4orf6. This viral RING-type ligase ubiquitinates cellular substrates and targets them to proteasomal degradation: TP53/p53, LIG4, MRE11-RAD50-NBS1 (MRN) complex, ITGA3, DAXX and BLM. E1B-55K probably acts as the substrate-specific adapter of the SCF-like E3 ubiquitin ligase complex. Degradation of host TP53/p53 activity is essential for preventing E1A-induced TP53 accumulation that would otherwise lead to cell apoptosis and growth arrest. E1B-55K also inactivates TP53 transcription-factor activity by binding its transactivation domain. E1B-55K also functions as a SUMO1 E3 ligase for TP53 which causes the latter to be sequestered in promyelocytic leukemia (PML) nuclear bodies thereby contributing to maximal inhibition of TP53 function. This Tree shrew adenovirus serotype 1 (TSAdV-1) protein is E1B 55 kDa protein.